Consider the following 198-residue polypeptide: Probable GTP-binding protein EngB (198 aa).

The EngB-type G domain maps to Asn-22 to Thr-195. GTP contacts are provided by residues Gly-30–Ser-37, Gly-57–Leu-61, Asp-75–Gly-78, Thr-142–Asp-145, and Phe-174–Ser-176. Mg(2+) contacts are provided by Ser-37 and Thr-59.

This sequence belongs to the TRAFAC class TrmE-Era-EngA-EngB-Septin-like GTPase superfamily. EngB GTPase family. Requires Mg(2+) as cofactor.

Necessary for normal cell division and for the maintenance of normal septation. The polypeptide is Probable GTP-binding protein EngB (Clostridium beijerinckii (strain ATCC 51743 / NCIMB 8052) (Clostridium acetobutylicum)).